The following is a 108-amino-acid chain: Nucleoid-associated protein BamMC406_1737 (108 aa).

Residues 85–95 (ATSQEKMSGMT) are compositionally biased toward polar residues. Positions 85–108 (ATSQEKMSGMTSGLPLPPGFKLPF) are disordered. Pro residues predominate over residues 99 to 108 (PLPPGFKLPF).

The protein belongs to the YbaB/EbfC family. As to quaternary structure, homodimer.

It is found in the cytoplasm. It localises to the nucleoid. In terms of biological role, binds to DNA and alters its conformation. May be involved in regulation of gene expression, nucleoid organization and DNA protection. In Burkholderia ambifaria (strain MC40-6), this protein is Nucleoid-associated protein BamMC406_1737.